The following is a 982-amino-acid chain: MDEEESTERQMQIAMLCQKLAMMKQLFNEDDTDYINQAISSNSPDTCRTFLSNLEKKGNPQADPSLLSKLMDSYTRVFSSMPLGKYSQNESYAKMLVRFAELKAIQDVNDAQTSFDIARSHCKDFAFVHVAYAQFELLQGNMKKCTMILQKAFEMNAKPRHVLEAAVRNLKTGKRQLLSHEDKENLSVSALDHTQGSRRSDGTCELKPSNTFLHSDQKFSPQEENGPVWRTGSQHRRTAMAERVPMVPLSIPENETSDSDCAQKAEAPFTHSSGFSRQTSGSSVRSAFSLCSSKKGTPDGDSYSLNIKPPVISPDYLREDIEEGHTITALLNRAEKRETARTEETTDINQIISTNSTEGCQAFLKNLEKRADPHSDAAFLSKLLDCYSKVFARFPLAEHCKTESYARMLVRYAELKGIEDPEDAADDFSIARSHCKAFAFVHIAHAQFELSRGNSRKSVSILQKALSSNARPIELLQTAIRNLKSGKTLLLPAEHQESSEAENVEAQNGMKREENPVKAPEDHQKPFSKETSSEWKIPALITKHTSPEDRKAPVEPVSSSSSHHAVRTPAPLRLNPSLSCQTPNYRQPNPNSFVTPVVKQRPVIVSVPATAQKMCPTALPCTPQSGVSYIQPPTQTPSSAFSNESITIKGKQFFIFKMIGRGGSSKVYQVFDHKKHVYAVKYVNLEEADAQAVESYKNEIEHLNHLQQYSDQIIKLYDYEITSSYIYMLMECGHLDLNTWLRNRKTVKPLDRKAYWRNMLEAVHTIHKHGIVHSDLKPANFLIVDGSLKLIDFGIANQIQPDVTSIMKDSQVGTLNYMPPEAIKDTSSNGKPGSKISAKGDVWSLGCILYCMTYGKTPFQNITNQISKIHAIIDPSHEIDFPDIPEKDLLDVLKKCLVRNPRERISIAELLDHPYLQLQPQPAPEPAETSSSDFKRILNELVALQSPNSIARAASNLAMMCNSGRKLDVSECVKSSSQTLWK.

3 disordered regions span residues 178–204, 211–230, and 493–574; these read LSHE…DGTC, TFLH…PVWR, and AEHQ…PLRL. Residues 211-223 are compositionally biased toward polar residues; sequence TFLHSDQKFSPQE. Residues 510 to 533 show a composition bias toward basic and acidic residues; sequence MKREENPVKAPEDHQKPFSKETSS. One can recognise a Protein kinase domain in the interval 653–916; it reads FFIFKMIGRG…IAELLDHPYL (264 aa). Residues 659-667 and Lys681 each bind ATP; that span reads IGRGGSSKV. Catalysis depends on Asp775, which acts as the Proton acceptor.

It belongs to the protein kinase superfamily. Ser/Thr protein kinase family. The cofactor is Mg(2+). As to expression, barely detectable in adult somatic tissues. Expressed in immature germ cells that have not completed meiosis. In ovary, expressed predominantly in previtellogenic oocytes. In testis, expressed in primary and secondary spermatocytes, but not mature spermatozoa.

The catalysed reaction is L-seryl-[protein] + ATP = O-phospho-L-seryl-[protein] + ADP + H(+). It catalyses the reaction L-threonyl-[protein] + ATP = O-phospho-L-threonyl-[protein] + ADP + H(+). It carries out the reaction L-tyrosyl-[protein] + ATP = O-phospho-L-tyrosyl-[protein] + ADP + H(+). Involved in mitotic spindle assembly checkpoint signaling, a process that delays anaphase until chromosomes are bioriented on the spindle, and in the repair of incorrect mitotic kinetochore-spindle microtubule attachments. Required to prevent chromosome segregation errors during meiosis. Required for fin and heart regeneration. The protein is Dual specificity protein kinase Ttk (ttk) of Danio rerio (Zebrafish).